The chain runs to 267 residues: Glucosamine-6-phosphate deaminase (267 aa).

The Proton acceptor; for enolization step role is filled by Asp-72. Asp-141 (for ring-opening step) is an active-site residue. The Proton acceptor; for ring-opening step role is filled by His-143. Glu-148 functions as the For ring-opening step in the catalytic mechanism.

It belongs to the glucosamine/galactosamine-6-phosphate isomerase family. NagB subfamily. Homohexamer.

The catalysed reaction is alpha-D-glucosamine 6-phosphate + H2O = beta-D-fructose 6-phosphate + NH4(+). The protein operates within amino-sugar metabolism; N-acetylneuraminate degradation; D-fructose 6-phosphate from N-acetylneuraminate: step 5/5. With respect to regulation, allosterically activated by N-acetylglucosamine 6-phosphate (GlcNAc6P). In terms of biological role, catalyzes the reversible isomerization-deamination of glucosamine 6-phosphate (GlcN6P) to form fructose 6-phosphate (Fru6P) and ammonium ion. The polypeptide is Glucosamine-6-phosphate deaminase (Actinobacillus pleuropneumoniae serotype 3 (strain JL03)).